Consider the following 241-residue polypeptide: Probable transcriptional regulatory protein LHK_02347 (241 aa).

This sequence belongs to the TACO1 family.

It localises to the cytoplasm. This Laribacter hongkongensis (strain HLHK9) protein is Probable transcriptional regulatory protein LHK_02347.